We begin with the raw amino-acid sequence, 223 residues long: Uridylate kinase (223 aa).

Gly9 to Ser10 lines the ATP pocket. Residue Gly43 participates in UMP binding. ATP-binding residues include Gly44 and Arg48. UMP is bound by residues Asp65 and Thr112–Thr118. ATP is bound by residues Thr137, Asn138, Tyr143, and Asp146.

The protein belongs to the UMP kinase family. Homohexamer.

It is found in the cytoplasm. It catalyses the reaction UMP + ATP = UDP + ADP. It participates in pyrimidine metabolism; CTP biosynthesis via de novo pathway; UDP from UMP (UMPK route): step 1/1. Its activity is regulated as follows. Inhibited by UTP. Catalyzes the reversible phosphorylation of UMP to UDP. In Methanopyrus kandleri (strain AV19 / DSM 6324 / JCM 9639 / NBRC 100938), this protein is Uridylate kinase.